A 152-amino-acid chain; its full sequence is Probable methionine-R-sulfoxide reductase B (152 aa).

Positions 27–151 constitute a MsrB domain; that stretch reads QTEWKSVLPN…NSVCMAFEKK (125 aa). Positions 66, 69, 116, and 119 each coordinate Zn(2+). The active-site Nucleophile is cysteine 140.

Belongs to the MsrB Met sulfoxide reductase family. The cofactor is Zn(2+).

The enzyme catalyses L-methionyl-[protein] + [thioredoxin]-disulfide + H2O = L-methionyl-(R)-S-oxide-[protein] + [thioredoxin]-dithiol. In terms of biological role, methionine-sulfoxide reductase that specifically reduces methionine (R)-sulfoxide back to methionine. While in many cases, methionine oxidation is the result of random oxidation following oxidative stress, methionine oxidation is also a post-translational modification that takes place on specific residue. The sequence is that of Probable methionine-R-sulfoxide reductase B from Caenorhabditis elegans.